A 120-amino-acid chain; its full sequence is MVGLSRLADGGLLLVLALLPLALDGKPAPLEKAPMAPARIIPYLRPVGKESRAALDRMVPPEDGDSRRLEGLAKEALGEGCFGNRIDRIGDVSGMGCNRRTPAPKAPLRILPYLRPIRKE.

The N-terminal stretch at 1–25 (MVGLSRLADGGLLLVLALLPLALDG) is a signal peptide. Positions 26-70 (KPAPLEKAPMAPARIIPYLRPVGKESRAALDRMVPPEDGDSRRLE) are excised as a propeptide. Cysteine 81 and cysteine 97 form a disulfide bridge. Residues 110–120 (ILPYLRPIRKE) constitute a propeptide that is removed on maturation.

Belongs to the natriuretic peptide family. Expressed by the venom gland.

It localises to the secreted. Its function is as follows. Natriuretic peptide that dose-dependently induces the rapid relaxation of rat aortic strips phenylephrine-precontracted. Acts by stimulating cGMP production in a dose-dependent manner (by probably activating NPR1 and/or NPR2). May also show potent hypotensive effects. The protein is Natriuretic peptide of Micrurus altirostris (Uruguayan coral snake).